A 175-amino-acid polypeptide reads, in one-letter code: NADH-ubiquinone oxidoreductase chain 6 (175 aa).

Helical transmembrane passes span 1–21 (MTMY…VGFS), 25–45 (SPIY…GIVL), 47–67 (FGGS…MLVV), 88–108 (TVFG…YYAL), and 149–169 (YGTW…VVIM).

Belongs to the complex I subunit 6 family. As to quaternary structure, core subunit of respiratory chain NADH dehydrogenase (Complex I) which is composed of 45 different subunits.

Its subcellular location is the mitochondrion inner membrane. The enzyme catalyses a ubiquinone + NADH + 5 H(+)(in) = a ubiquinol + NAD(+) + 4 H(+)(out). Functionally, core subunit of the mitochondrial membrane respiratory chain NADH dehydrogenase (Complex I) which catalyzes electron transfer from NADH through the respiratory chain, using ubiquinone as an electron acceptor. Essential for the catalytic activity and assembly of complex I. The protein is NADH-ubiquinone oxidoreductase chain 6 (MT-ND6) of Sus scrofa (Pig).